The following is a 148-amino-acid chain: uncharacterized protein (148 aa).

2 consecutive transmembrane segments (helical) span residues 16 to 36 (IVGA…SIIL) and 41 to 61 (LSFS…AYIF).

It to M.jannaschii MJ0696.

The protein resides in the cell membrane. This is an uncharacterized protein from Methanocaldococcus jannaschii (strain ATCC 43067 / DSM 2661 / JAL-1 / JCM 10045 / NBRC 100440) (Methanococcus jannaschii).